The following is a 218-amino-acid chain: Elongation factor Ts (218 aa).

The involved in Mg(2+) ion dislocation from EF-Tu stretch occupies residues 82-85 (TDFV).

It belongs to the EF-Ts family.

The protein localises to the cytoplasm. Functionally, associates with the EF-Tu.GDP complex and induces the exchange of GDP to GTP. It remains bound to the aminoacyl-tRNA.EF-Tu.GTP complex up to the GTP hydrolysis stage on the ribosome. The polypeptide is Elongation factor Ts (Prochlorococcus marinus (strain MIT 9215)).